The sequence spans 470 residues: Nuclear receptor subfamily 0 group B member 1 (470 aa).

A run of 3 repeats spans residues 1-67, 68-133, and 134-200. A 4 X 67 AA tandem repeats region spans residues 1 to 253; the sequence is MAGEDHQWQG…RPVALKNPQV (253 aa). Short sequence motifs (LXXLL motif) lie at residues 13–17, 80–84, and 146–150; these read LYNML, LYSML, and LYSLL. One copy of the 4; truncated repeat lies at 201-253; the sequence is FCGEDQPQQGSTLYSMPTSTNQTPAAPEERPGAPWWDTSCGALRPVALKNPQV. An NR LBD domain is found at 205 to 469; sequence DQPQQGSTLY…DMMLEMLCTK (265 aa). Residues 461 to 466 carry the AF-2 motif motif; sequence MMLEML.

This sequence belongs to the nuclear hormone receptor family. NR0 subfamily. In terms of assembly, homodimer. Interacts with NR5A1, NR5A2, NR0B2 and with COPS2. Interacts with ESRRB; represses ESRRB activity at the GATA6 promoter.

The protein resides in the nucleus. The protein localises to the cytoplasm. Its function is as follows. Nuclear receptor that lacks a DNA-binding domain and acts as a corepressor that inhibits the transcriptional activity of other nuclear receptors through heterodimeric interactions. Component of a cascade required for the development of the hypothalamic-pituitary-adrenal-gonadal axis. May also have a role in the development of the embryo and in the maintenance of embryonic stem cell pluripotency. This chain is Nuclear receptor subfamily 0 group B member 1 (NR0B1), found in Callithrix jacchus (White-tufted-ear marmoset).